The following is a 252-amino-acid chain: F-box/SPRY domain-containing protein 1 (252 aa).

Residues 1–48 form the F-box domain; it reads MVDPLCNYNVLEAIFSYLELNDLYRCSQVCKSWYHFLNDENSDVWRWH. The 193-residue stretch at 58 to 250 folds into the B30.2/SPRY domain; the sequence is VKSDLLASVS…VSMVYLGTPL (193 aa).

The protein belongs to the FBXO45/Fsn family. In terms of assembly, component of an E3 ubiquitin ligase complex composed of hiw and Fsn.

The protein resides in the synapse. It participates in protein modification; protein ubiquitination. Required in the presynaptic motoneuron to down-regulate the levels of wnd and restrain synaptic terminal growth at the neuromuscular junction (NMJ). In Drosophila virilis (Fruit fly), this protein is F-box/SPRY domain-containing protein 1.